We begin with the raw amino-acid sequence, 475 residues long: ESX-3 secretion system protein EccD3 (475 aa).

11 helical membrane passes run 132–152 (IARGAALALIGLILVGTGLSV), 161–181 (LLGQFIVSGIALATVIAALAV), 186–206 (AVLATSLAVTALVPVAAAFAL), 212–232 (FGAPNVLLAAAGVAAWSLISM), 241–261 (IAVFTATAVTGVGVLLVAGAA), 264–284 (WVISSDVIGCALVLLGLIVTV), 333–353 (GVIAAGVLLGVAGSVALVSSA), 354–374 (NASPWAWYIVVAAAAGAALRA), 384–404 (AWLLGHSYLLAVALLVAFVIG), 409–429 (AALWALAALAVLVLVWIVAAL), and 453–473 (GLDASLIPVMALLVGLFSLVL).

The protein belongs to the EccD/Snm4 family. Part of the ESX-3 / type VII secretion system (T7SS), which is composed of cytosolic and membrane components. The ESX-3 membrane complex is composed of EccB3, EccC3, EccD3 and EccE3.

The protein localises to the cell inner membrane. Functionally, part of the ESX-3 specialized secretion system, which is required for siderophore-mediated iron acquisition and for the secretion of EsxH and EsxG. This is ESX-3 secretion system protein EccD3 from Mycolicibacterium smegmatis (strain ATCC 700084 / mc(2)155) (Mycobacterium smegmatis).